Here is a 1806-residue protein sequence, read N- to C-terminus: Atrochrysone carboxylic acid synthase (1806 aa).

An N-terminal acylcarrier protein transacylase domain (SAT) region spans residues 30 to 283; the sequence is DLQGLFRRLY…SLPVYSGLCH (254 aa). Residues 416–850 enclose the Ketosynthase family 3 (KS3) domain; that stretch reads QSKIAIIGMS…GGNTTVCLEE (435 aa). Active-site for beta-ketoacyl synthase activity residues include C589, H725, and H768. The interval 951-1270 is malonyl-CoA:ACP transacylase (MAT) domain; sequence FAFTGQGASY…SLTALHCAGV (320 aa). The segment at 1340–1659 is product template (PT) domain; sequence TSTVQQIIEE…RILLNRFFTA (320 aa). The tract at residues 1344-1479 is N-terminal hotdog fold; sequence QQIIEESFNG…ASILYDDAAL (136 aa). A PKS/mFAS DH domain is found at 1344–1654; it reads QQIIEESFNG…FRRYPRILLN (311 aa). H1376 (proton acceptor; for dehydratase activity) is an active-site residue. A C-terminal hotdog fold region spans residues 1506–1654; sequence IANRFTRNMA…FRRYPRILLN (149 aa). D1565 functions as the Proton donor; for dehydratase activity in the catalytic mechanism. Residues 1668-1726 are disordered; the sequence is HAAASSTPAPRTKPEPVPVATPATAAAPVAQSPAAPASVTPAPAPAPAPGPTPAAAPAA. Positions 1685-1708 are enriched in low complexity; sequence PVATPATAAAPVAQSPAAPASVTP. Pro residues predominate over residues 1709 to 1721; the sequence is APAPAPAPGPTPA. A Carrier domain is found at 1728 to 1805; sequence GESDSVAAKA…DLRSWLLEYY (78 aa). Position 1765 is an O-(pantetheine 4'-phosphoryl)serine (S1765).

It carries out the reaction holo-[ACP] + 8 malonyl-CoA + 8 H(+) = atrochrysone carboxyl-[ACP] + 8 CO2 + 8 CoA + 2 H2O. It participates in secondary metabolite biosynthesis. In terms of biological role, atrochrysone carboxylic acid synthase; part of the gene cluster that mediates the biosynthesis of monodictyphenone, a prenyl xanthone derivative. The pathway begins with the synthesis of atrochrysone thioester by the polyketide synthase (PKS) mdpG. The atrochrysone carboxyl ACP thioesterase mdpF then breaks the thioester bond and releases the atrochrysone carboxylic acid from mdpG. The atrochrysone carboxylic acid is then converted to atrochrysone which is further transformed into emodin anthrone. The next step is performed by the anthrone oxygenase mdpH that catalyzes the oxidation of emodinanthrone to emodin. Emodin is further modified to yield monodictyphenone via several steps involving mdpB, mdpC mdpJ, mdpK and mdpL. The short chain dehydrogenase mdpC converts the tautomers of emodin hydroquinone into the 3-hydroxy-3,4-dihydroan-thracen-1(2H)-one derivative. These enzymes with xptA, xptB and xptC are also proposed to be involved in the synthesis of shamixanthone from emodin. Especially, direct reduction of emodin by the short chain dehydrogenase mdpC followed by dehydration catalyzed by the scytalone dehydratase-like protein mdpB gives loss of oxygen and formation of chrysophanol intermediate in two simple steps. The protein is Atrochrysone carboxylic acid synthase of Emericella nidulans (strain FGSC A4 / ATCC 38163 / CBS 112.46 / NRRL 194 / M139) (Aspergillus nidulans).